The primary structure comprises 319 residues: tRNA(Ile)-lysidine synthase (319 aa).

32-37 (SGGSDS) contributes to the ATP binding site.

The protein belongs to the tRNA(Ile)-lysidine synthase family.

The protein resides in the cytoplasm. The enzyme catalyses cytidine(34) in tRNA(Ile2) + L-lysine + ATP = lysidine(34) in tRNA(Ile2) + AMP + diphosphate + H(+). Ligates lysine onto the cytidine present at position 34 of the AUA codon-specific tRNA(Ile) that contains the anticodon CAU, in an ATP-dependent manner. Cytidine is converted to lysidine, thus changing the amino acid specificity of the tRNA from methionine to isoleucine. The protein is tRNA(Ile)-lysidine synthase of Chlamydia pneumoniae (Chlamydophila pneumoniae).